A 211-amino-acid polypeptide reads, in one-letter code: Protein-methionine-sulfoxide reductase heme-binding subunit MsrQ (211 aa).

5 consecutive transmembrane segments (helical) span residues 17–37 (LAGL…GLGA), 82–102 (LWCF…ELGV), 116–136 (PYLT…FTST), 153–173 (FVYL…KIIS), and 178–198 (IYAG…LSLF).

This sequence belongs to the MsrQ family. In terms of assembly, heterodimer of a catalytic subunit (MsrP) and a heme-binding subunit (MsrQ). Requires FMN as cofactor. The cofactor is heme b.

The protein resides in the cell inner membrane. In terms of biological role, part of the MsrPQ system that repairs oxidized periplasmic proteins containing methionine sulfoxide residues (Met-O), using respiratory chain electrons. Thus protects these proteins from oxidative-stress damage caused by reactive species of oxygen and chlorine generated by the host defense mechanisms. MsrPQ is essential for the maintenance of envelope integrity under bleach stress, rescuing a wide series of structurally unrelated periplasmic proteins from methionine oxidation, including the primary periplasmic chaperone SurA and the lipoprotein Pal. MsrQ provides electrons for reduction to the reductase catalytic subunit MsrP, using the quinone pool of the respiratory chain. The sequence is that of Protein-methionine-sulfoxide reductase heme-binding subunit MsrQ from Shigella boydii serotype 4 (strain Sb227).